The chain runs to 757 residues: Polyribonucleotide nucleotidyltransferase (757 aa).

Positions 482 and 488 each coordinate Mg(2+). Residues 549–608 (PRMLSFYIDKDKISAAIGSKGKNIRSVCERSNAKIEIGDDGKVSVFATSGTEAEIAKSMM) enclose the KH domain. An S1 motif domain is found at 618–686 (GSIVDVKVVR…KGGCPKLSRR (69 aa)). Positions 698–757 (GELYNEERKDGPNDRDNYYNNSFSRKPGGSHHKRPPRPHSGFSNRNRPKFGNNDSSSGFY) are disordered. Over residues 702–714 (NEERKDGPNDRDN) the composition is skewed to basic and acidic residues. Basic residues predominate over residues 725–734 (GGSHHKRPPR).

Belongs to the polyribonucleotide nucleotidyltransferase family. Requires Mg(2+) as cofactor.

It localises to the cytoplasm. The enzyme catalyses RNA(n+1) + phosphate = RNA(n) + a ribonucleoside 5'-diphosphate. In terms of biological role, involved in mRNA degradation. Catalyzes the phosphorolysis of single-stranded polyribonucleotides processively in the 3'- to 5'-direction. The chain is Polyribonucleotide nucleotidyltransferase from Wolbachia pipientis wMel.